Here is a 32-residue protein sequence, read N- to C-terminus: Photosystem II reaction center protein T (32 aa).

Residues 3–23 (ALVYVFLLIGTLMIIFFAIFF) traverse the membrane as a helical segment.

Belongs to the PsbT family. In terms of assembly, PSII is composed of 1 copy each of membrane proteins PsbA, PsbB, PsbC, PsbD, PsbE, PsbF, PsbH, PsbI, PsbJ, PsbK, PsbL, PsbM, PsbT, PsbY, PsbZ, Psb30/Ycf12, at least 3 peripheral proteins of the oxygen-evolving complex and a large number of cofactors. It forms dimeric complexes.

The protein localises to the plastid. The protein resides in the chloroplast thylakoid membrane. Functionally, found at the monomer-monomer interface of the photosystem II (PS II) dimer, plays a role in assembly and dimerization of PSII. PSII is a light-driven water plastoquinone oxidoreductase, using light energy to abstract electrons from H(2)O, generating a proton gradient subsequently used for ATP formation. This Cyanidioschyzon merolae (strain NIES-3377 / 10D) (Unicellular red alga) protein is Photosystem II reaction center protein T.